The primary structure comprises 523 residues: 2-isopropylmalate synthase (523 aa).

In terms of domain architecture, Pyruvate carboxyltransferase spans 5–267 (VIIFDTTLRD…HTAINHQEIW (263 aa)). Mn(2+) is bound by residues aspartate 14, histidine 202, histidine 204, and asparagine 238. Residues 392–523 (RLDYFSVQSG…QHNENNKETV (132 aa)) are regulatory domain.

The protein belongs to the alpha-IPM synthase/homocitrate synthase family. LeuA type 1 subfamily. In terms of assembly, homodimer. The cofactor is Mn(2+).

The protein resides in the cytoplasm. The enzyme catalyses 3-methyl-2-oxobutanoate + acetyl-CoA + H2O = (2S)-2-isopropylmalate + CoA + H(+). It functions in the pathway amino-acid biosynthesis; L-leucine biosynthesis; L-leucine from 3-methyl-2-oxobutanoate: step 1/4. Catalyzes the condensation of the acetyl group of acetyl-CoA with 3-methyl-2-oxobutanoate (2-ketoisovalerate) to form 3-carboxy-3-hydroxy-4-methylpentanoate (2-isopropylmalate). This is 2-isopropylmalate synthase from Shigella flexneri serotype 5b (strain 8401).